The sequence spans 161 residues: Large ribosomal subunit protein uL15 (161 aa).

The disordered stretch occupies residues 1 to 42 (MKLSDIADNAGSRKKRMRVGRGIGSGKGKQSGRGGKGQTARS). Over residues 21-37 (RGIGSGKGKQSGRGGKG) the composition is skewed to gly residues.

This sequence belongs to the universal ribosomal protein uL15 family. In terms of assembly, part of the 50S ribosomal subunit.

Functionally, binds to the 23S rRNA. This is Large ribosomal subunit protein uL15 from Bradyrhizobium diazoefficiens (strain JCM 10833 / BCRC 13528 / IAM 13628 / NBRC 14792 / USDA 110).